A 143-amino-acid polypeptide reads, in one-letter code: Small ribosomal subunit protein eS19y (143 aa).

It belongs to the eukaryotic ribosomal protein eS19 family.

The protein is Small ribosomal subunit protein eS19y (RPS19B) of Arabidopsis thaliana (Mouse-ear cress).